The following is a 366-amino-acid chain: tRNA/tmRNA (uracil-C(5))-methyltransferase (366 aa).

The S-adenosyl-L-methionine site is built by Gln-190, Tyr-218, Asn-223, Glu-239, and Asp-299. Cys-324 functions as the Nucleophile in the catalytic mechanism. The active-site Proton acceptor is Glu-358.

The protein belongs to the class I-like SAM-binding methyltransferase superfamily. RNA M5U methyltransferase family. TrmA subfamily.

The catalysed reaction is uridine(54) in tRNA + S-adenosyl-L-methionine = 5-methyluridine(54) in tRNA + S-adenosyl-L-homocysteine + H(+). It catalyses the reaction uridine(341) in tmRNA + S-adenosyl-L-methionine = 5-methyluridine(341) in tmRNA + S-adenosyl-L-homocysteine + H(+). Dual-specificity methyltransferase that catalyzes the formation of 5-methyluridine at position 54 (m5U54) in all tRNAs, and that of position 341 (m5U341) in tmRNA (transfer-mRNA). The sequence is that of tRNA/tmRNA (uracil-C(5))-methyltransferase from Shigella flexneri serotype 5b (strain 8401).